A 361-amino-acid polypeptide reads, in one-letter code: uncharacterized protein (361 aa).

The segment covering methionine 1–proline 10 has biased composition (basic residues). 2 disordered regions span residues methionine 1–histidine 82 and alanine 94–serine 147. 2 stretches are compositionally biased toward basic and acidic residues: residues lysine 44–asparagine 57 and phenylalanine 120–leucine 134. Residues glutamine 135–serine 147 show a composition bias toward polar residues. The stretch at asparagine 295–aspartate 349 forms a coiled coil.

It localises to the cytoplasm. The protein resides in the nucleus. This is an uncharacterized protein from Schizosaccharomyces pombe (strain 972 / ATCC 24843) (Fission yeast).